An 82-amino-acid polypeptide reads, in one-letter code: uncharacterized protein (82 aa).

3 helical membrane-spanning segments follow: residues 4-26 (LDIA…TCIC), 31-48 (LMPM…FTIF), and 52-74 (FLGW…LIVV).

Its subcellular location is the cell membrane. This is an uncharacterized protein from Bacillus subtilis (strain 168).